The following is a 470-amino-acid chain: Synaptotagmin-17 (470 aa).

The disordered stretch occupies residues 54-112 (PPWLMASRSNDKDGDSVHTASDVPLTPRTNSPDGRRSSSDTSKSTYSLTRRISSLDSRR). Residues 92–112 (SDTSKSTYSLTRRISSLDSRR) show a composition bias toward low complexity. A phosphoserine mark is found at Ser-114 and Ser-115. C2 domains are found at residues 180–306 (QLGM…HWWK) and 317–451 (ELGE…EQWH).

The protein belongs to the synaptotagmin family.

It is found in the membrane. Plays a role in dendrite formation by melanocytes. This chain is Synaptotagmin-17 (Syt17), found in Mus musculus (Mouse).